The sequence spans 312 residues: Retinol dehydrogenase 8 (312 aa).

9–18 (LISGCSSGIG) contacts NADP(+). 3 helical membrane passes run 87 to 107 (VLVN…SLAA), 138 to 158 (IVVV…VYAA), and 170 to 190 (LAVQ…GPVV). Ser143 provides a ligand contact to substrate. The active-site Proton acceptor is the Tyr156.

Belongs to the short-chain dehydrogenases/reductases (SDR) family. In terms of tissue distribution, detected in photoreceptor outer segments in the retina (at protein level).

It localises to the membrane. It catalyses the reaction all-trans-retinol + NADP(+) = all-trans-retinal + NADPH + H(+). Its function is as follows. Retinol dehydrogenase with a clear preference for NADP. Converts all-trans-retinal to all-trans-retinol. May play a role in the regeneration of visual pigment at high light intensity. The polypeptide is Retinol dehydrogenase 8 (RDH8) (Bos taurus (Bovine)).